The sequence spans 979 residues: Translation initiation factor IF-2 (979 aa).

The segment covering 50 to 77 has biased composition (basic and acidic residues); sequence LKRSHGQSDDSARKKITLTKRETSEIRQ. Positions 50–385 are disordered; that stretch reads LKRSHGQSDD…GKHNADDARS (336 aa). The segment covering 78–87 has biased composition (polar residues); that stretch reads SDSTGKTRTV. Basic and acidic residues-rich tracts occupy residues 98 to 109, 121 to 142, and 149 to 173; these read IKRDDVESHGDG, EEVR…RQEA, and EAAE…RRQA. Positions 174–192 are enriched in low complexity; it reads ELLAQKAAEEAAAAQAAAD. 3 stretches are compositionally biased toward basic and acidic residues: residues 196 to 211, 219 to 263, and 280 to 291; these read ETAR…RLAT, NADD…EAEA, and PSERKAEEKKAE. A compositionally biased stretch (low complexity) spans 317-327; it reads APAATTTTAAA. Gly residues predominate over residues 351–368; that stretch reads GGGLKTRGDSSGGVGGWR. Residues 479–646 form the tr-type G domain; sequence PRPPVVTVMG…NVLLQAEVLE (168 aa). Positions 488–495 are G1; it reads GHVDHGKT. 488-495 is a GTP binding site; sequence GHVDHGKT. The segment at 513 to 517 is G2; it reads GITQH. Positions 534–537 are G3; it reads DTPG. GTP contacts are provided by residues 534-538 and 588-591; these read DTPGH and TKVD. The G4 stretch occupies residues 588–591; the sequence is TKVD. The tract at residues 624 to 626 is G5; sequence SAK.

This sequence belongs to the TRAFAC class translation factor GTPase superfamily. Classic translation factor GTPase family. IF-2 subfamily.

The protein resides in the cytoplasm. Functionally, one of the essential components for the initiation of protein synthesis. Protects formylmethionyl-tRNA from spontaneous hydrolysis and promotes its binding to the 30S ribosomal subunits. Also involved in the hydrolysis of GTP during the formation of the 70S ribosomal complex. The protein is Translation initiation factor IF-2 of Cupriavidus metallidurans (strain ATCC 43123 / DSM 2839 / NBRC 102507 / CH34) (Ralstonia metallidurans).